We begin with the raw amino-acid sequence, 449 residues long: uncharacterized protein (449 aa).

The span at 1 to 13 (MPKAPKTKLHHAP) shows a compositional bias: basic residues. The segment at 1-125 (MPKAPKTKLH…SQEEEEYEEL (125 aa)) is disordered. Residue serine 22 is modified to Phosphoserine. Residues 73–84 (KPSQISAFISNG) are compositionally biased toward polar residues. Phosphoserine is present on serine 156.

This sequence belongs to the bystin family.

This is an uncharacterized protein from Schizosaccharomyces pombe (strain 972 / ATCC 24843) (Fission yeast).